The primary structure comprises 472 residues: Methanethiol oxidase (472 aa).

The residue at position 2 (alanine 2) is an N-acetylalanine. Phosphoserine occurs at positions 111 and 467.

Belongs to the selenium-binding protein family. As to quaternary structure, interacts with USP33. Post-translationally, the N-terminus is blocked. Present in liver and colon (at protein level).

The protein resides in the nucleus. It is found in the cytoplasm. Its subcellular location is the cytosol. It localises to the membrane. The catalysed reaction is methanethiol + O2 + H2O = hydrogen sulfide + formaldehyde + H2O2 + H(+). It functions in the pathway organosulfur degradation. Catalyzes the oxidation of methanethiol, an organosulfur compound known to be produced in substantial amounts by gut bacteria. Selenium-binding protein which may be involved in the sensing of reactive xenobiotics in the cytoplasm. May be involved in intra-Golgi protein transport. This is Methanethiol oxidase (Selenbp1) from Rattus norvegicus (Rat).